Here is a 162-residue protein sequence, read N- to C-terminus: Peroxiredoxin-2B (162 aa).

The Thioredoxin domain maps to 4 to 162; it reads IAVGDVVPDG…SSADDILKAL (159 aa). The active-site Cysteine sulfenic acid (-SOH) intermediate is the Cys-51.

It belongs to the peroxiredoxin family. Prx5 subfamily. In terms of assembly, monomer. In terms of tissue distribution, expressed in all tissues but mostly in reproductive tissues such as buds, flowers, siliques and seeds.

It localises to the cytoplasm. The enzyme catalyses [glutaredoxin]-dithiol + a hydroperoxide = [glutaredoxin]-disulfide + an alcohol + H2O. In terms of biological role, reduces hydrogen peroxide and alkyl hydroperoxides with reducing equivalents provided through the thioredoxin or glutaredoxin system. May be involved in intracellular redox signaling. Its function is as follows. Thiol-specific peroxidase that catalyzes the reduction of hydrogen peroxide and organic hydroperoxides to water and alcohols, respectively. Plays a role in cell protection against oxidative stress by detoxifying peroxides and as sensor of hydrogen peroxide-mediated signaling events. The polypeptide is Peroxiredoxin-2B (PRXIIB) (Arabidopsis thaliana (Mouse-ear cress)).